The following is an 87-amino-acid chain: Cell division topological specificity factor (87 aa).

It belongs to the MinE family.

In terms of biological role, prevents the cell division inhibition by proteins MinC and MinD at internal division sites while permitting inhibition at polar sites. This ensures cell division at the proper site by restricting the formation of a division septum at the midpoint of the long axis of the cell. The polypeptide is Cell division topological specificity factor (Clostridium botulinum (strain ATCC 19397 / Type A)).